A 474-amino-acid chain; its full sequence is MSYQTGMAPARAMEDDSDVEEEALVADYREQVQYSEGGMEEMDQATLAQQADEIQSRLVQASQPLDFQATLETKFASYDNYCALFHYILNSEGPVDLEPPTYYWAWDVIDEFIYQFNTFCTYRARIARQAGNEEEAQILRDNPNTWGCYSVLNVLYSLIQKSQITEQLAAMKRNEDPMAVAGPYGSKNLYRMLGYFSIIGLLRVHCLLGDFSLALKTLDDIELNKKAMFARVMAAHFTTYYYVGFSYMMMRRYADAIRMFSHILIYVSRTKNFQKNTQYDSITKKNDQMLALIAICVAFHPTRLDDTIHTALREKYGDQLLKLQRGGPDSLPVFEELFKSACPKFMSPIPPDFDKPEANIDPIDHHLSVFMEEVKTNMWSPTVKSYLRLYTTMDLKKLAGFLDVKPEELRSWLLVSKQRTKQLRWTENGLLEGEPVNVSDLDYALQGDLIHISEAKMGRKLVDWYIRNLSRTYA.

In terms of domain architecture, PCI spans 255–449; sequence DAIRMFSHIL…DLDYALQGDL (195 aa).

It belongs to the eIF-3 subunit L family. As to quaternary structure, component of the eukaryotic translation initiation factor 3 (eIF-3) complex.

The protein localises to the cytoplasm. Component of the eukaryotic translation initiation factor 3 (eIF-3) complex, which is involved in protein synthesis of a specialized repertoire of mRNAs and, together with other initiation factors, stimulates binding of mRNA and methionyl-tRNAi to the 40S ribosome. The eIF-3 complex specifically targets and initiates translation of a subset of mRNAs involved in cell proliferation. This is Eukaryotic translation initiation factor 3 subunit L from Chaetomium globosum (strain ATCC 6205 / CBS 148.51 / DSM 1962 / NBRC 6347 / NRRL 1970) (Soil fungus).